The following is a 332-amino-acid chain: Ribosomal RNA-processing protein 8 (332 aa).

The tract at residues 1–109 (MGKKRINEVS…EVEKKNEEGD (109 aa)) is disordered. Basic residues-rich tracts occupy residues 38-53 (KKKK…KLAA) and 82-94 (KKKK…KKKY). Residues 95–109 (KPEAAEVEKKNEEGD) show a composition bias toward basic and acidic residues. Positions 158, 193, 213, 225, 226, and 242 each coordinate S-adenosyl-L-methionine.

The protein belongs to the methyltransferase superfamily. RRP8 family.

It localises to the nucleus. The protein localises to the nucleolus. Functionally, probable methyltransferase required to silence rDNA. The polypeptide is Ribosomal RNA-processing protein 8 (rrp-8) (Caenorhabditis briggsae).